A 448-amino-acid chain; its full sequence is MHFIAISINHRTADVALREQVAFRDDALRIAHEDLYETKSILENVILSTCNRTEVYAVVDQIHTGCYYIQRFLARAFGFEVDDIKAMSEVKVGDEAVEHLLRVTSGLDSIVLGETQILGQIRDAFFLAQSTGTTGTIFNHLFKQAITFAKRAHNETDIADNAVSVSYAAVELAKKVFGKLKSKQAIIIGAGEMSELSLLNLLGSGITDITVVNRTIENAMKLAAKHQVKYDELSSLPNLLESADIVISSTSAQTYIITNEMIERIAENRKQDSLVLIDIAVPRDIEPGISAITNIFNYDVDDLKGLVDANLRERQLAAATISEQIPAEIHAHNEWISMLGVVPVIRALREKAMAIQAETMDSIDRKLPGLSERERKIISKHTKSIINQMLKDPIKQAKELSSDKKSNEKLELFQNIFDIEAECPHEQAKQQKESKVKEISARRIFSFE.

Substrate is bound by residues 49-52, Ser109, 114-116, and Gln120; these read TCNR and ETQ. Cys50 functions as the Nucleophile in the catalytic mechanism. Position 189–194 (189–194) interacts with NADP(+); it reads GAGEMS.

It belongs to the glutamyl-tRNA reductase family. Homodimer.

The catalysed reaction is (S)-4-amino-5-oxopentanoate + tRNA(Glu) + NADP(+) = L-glutamyl-tRNA(Glu) + NADPH + H(+). It functions in the pathway porphyrin-containing compound metabolism; protoporphyrin-IX biosynthesis; 5-aminolevulinate from L-glutamyl-tRNA(Glu): step 1/2. Its function is as follows. Catalyzes the NADPH-dependent reduction of glutamyl-tRNA(Glu) to glutamate 1-semialdehyde (GSA). This Staphylococcus aureus (strain bovine RF122 / ET3-1) protein is Glutamyl-tRNA reductase.